The chain runs to 146 residues: Large ribosomal subunit protein uL15 (146 aa).

Over residues 1-18 the composition is skewed to basic and acidic residues; sequence MKLHELKPSEGSRKERNR. Positions 1–57 are disordered; that stretch reads MKLHELKPSEGSRKERNRVGRGIGSGNGKTSGKGHKGQNARSGGGVRPGFEGGQMPL. Composition is skewed to gly residues over residues 21 to 31 and 42 to 52; these read RGIGSGNGKTS and SGGGVRPGFEG.

It belongs to the universal ribosomal protein uL15 family. In terms of assembly, part of the 50S ribosomal subunit.

In terms of biological role, binds to the 23S rRNA. This is Large ribosomal subunit protein uL15 from Bacillus pumilus (strain SAFR-032).